Reading from the N-terminus, the 1427-residue chain is DNA-directed RNA polymerase subunit beta' (1427 aa).

The Zn(2+) site is built by Cys-66, Cys-68, Cys-81, and Cys-84. Asp-472, Asp-474, and Asp-476 together coordinate Mg(2+). Cys-815, Cys-889, Cys-896, and Cys-899 together coordinate Zn(2+).

It belongs to the RNA polymerase beta' chain family. In terms of assembly, the RNAP catalytic core consists of 2 alpha, 1 beta, 1 beta' and 1 omega subunit. When a sigma factor is associated with the core the holoenzyme is formed, which can initiate transcription. Mg(2+) is required as a cofactor. Requires Zn(2+) as cofactor.

It carries out the reaction RNA(n) + a ribonucleoside 5'-triphosphate = RNA(n+1) + diphosphate. In terms of biological role, DNA-dependent RNA polymerase catalyzes the transcription of DNA into RNA using the four ribonucleoside triphosphates as substrates. The protein is DNA-directed RNA polymerase subunit beta' of Bacteroides fragilis (strain ATCC 25285 / DSM 2151 / CCUG 4856 / JCM 11019 / LMG 10263 / NCTC 9343 / Onslow / VPI 2553 / EN-2).